Here is a 1584-residue protein sequence, read N- to C-terminus: Dicer-like protein 1 (1584 aa).

Residues E31–E60 form a disordered region. The region spanning L129–L310 is the Helicase ATP-binding domain. L142–T149 contributes to the ATP binding site. The DEAH box signature appears at D255–H258. The Helicase C-terminal domain maps to K448–T621. Positions S654–E744 constitute a Dicer dsRNA-binding fold domain. Residues K894–P1028 form the PAZ domain. RNase III domains follow at residues V1052–Q1207 and A1258–E1424. Mg(2+)-binding residues include E1298, D1410, and E1413. The region spanning T1458–G1545 is the DRBM domain. 4 residues coordinate Zn(2+): C1470, H1516, C1557, and C1559.

It belongs to the helicase family. Dicer subfamily. Requires Mg(2+) as cofactor. Mn(2+) serves as cofactor.

Its function is as follows. Dicer-like endonuclease involved in cleaving double-stranded RNA in the RNA interference (RNAi) pathway. Produces 21 to 25 bp dsRNAs (siRNAs) which target the selective destruction of homologous RNAs leading to sequence-specific suppression of gene expression, called post-transcriptional gene silencing (PTGS). Part of a broad host defense response against viral infection and transposons. Controls the expression of the non-LTR retrotransposon Tad in the African strain, Adiomopoume. This is Dicer-like protein 1 (dcl-1) from Neurospora crassa (strain ATCC 24698 / 74-OR23-1A / CBS 708.71 / DSM 1257 / FGSC 987).